The following is a 241-amino-acid chain: Methylthioribulose-1-phosphate dehydratase (241 aa).

The span at 1-12 shows a compositional bias: basic and acidic residues; sequence MSQEITQKDNND. The segment at 1 to 22 is disordered; sequence MSQEITQKDNNDHLVQSSDPDH. C101 provides a ligand contact to substrate. H118 and H120 together coordinate Zn(2+). E147 (proton donor/acceptor) is an active-site residue. Zn(2+) is bound at residue H203.

This sequence belongs to the aldolase class II family. MtnB subfamily. It depends on Zn(2+) as a cofactor.

The protein resides in the cytoplasm. The catalysed reaction is 5-(methylsulfanyl)-D-ribulose 1-phosphate = 5-methylsulfanyl-2,3-dioxopentyl phosphate + H2O. It functions in the pathway amino-acid biosynthesis; L-methionine biosynthesis via salvage pathway; L-methionine from S-methyl-5-thio-alpha-D-ribose 1-phosphate: step 2/6. Functionally, catalyzes the dehydration of methylthioribulose-1-phosphate (MTRu-1-P) into 2,3-diketo-5-methylthiopentyl-1-phosphate (DK-MTP-1-P). In Aspergillus terreus (strain NIH 2624 / FGSC A1156), this protein is Methylthioribulose-1-phosphate dehydratase.